The sequence spans 613 residues: Serine/threonine-protein kinase pkpA (613 aa).

The Protein kinase domain maps to 17–269 (SKLNTVLGKG…AQEILEHRFL (253 aa)). ATP is bound by residues 23–31 (LGKGAYKVV) and Lys50. Asp140 (proton acceptor) is an active-site residue. Disordered regions lie at residues 424-475 (LQPQ…STML) and 589-613 (VTQR…QELM). Pro residues predominate over residues 427–441 (QPQPQPQPQPQPQPQ). Residues 442–475 (PQFQLQPQLQYLSPQSTTSPGPTSDDNSTNSTML) show a composition bias toward low complexity. The span at 592 to 602 (RGLQGTRSGAS) shows a compositional bias: polar residues.

This sequence belongs to the protein kinase superfamily. Ser/Thr protein kinase family.

It catalyses the reaction L-seryl-[protein] + ATP = O-phospho-L-seryl-[protein] + ADP + H(+). It carries out the reaction L-threonyl-[protein] + ATP = O-phospho-L-threonyl-[protein] + ADP + H(+). Serine/threonine protein kinase that probably participates as an intermediate in an intracellular system controlling nuclear proliferation. The sequence is that of Serine/threonine-protein kinase pkpA (pkpA) from Phycomyces blakesleeanus (strain ATCC 8743b / DSM 1359 / FGSC 10004 / NBRC 33097 / NRRL 1555).